The following is a 270-amino-acid chain: Karrikin insensitive 2 receptor CA (270 aa).

S95 serves as the catalytic Nucleophile. Residues D217 and H246 contribute to the active site.

The protein belongs to the AB hydrolase superfamily. Expressed in stigma.

It localises to the nucleus. It is found in the cytoplasm. Functionally, hydrolase which may be involved in plant olfaction during volatile communication. The polypeptide is Karrikin insensitive 2 receptor CA (Petunia hybrida (Petunia)).